The sequence spans 566 residues: Transcription factor tasR (566 aa).

The span at 1–30 shows a compositional bias: low complexity; sequence MISASRMEESASSSSLSDAAAPPPGAALQS. Residues 1–31 are disordered; the sequence is MISASRMEESASSSSLSDAAAPPPGAALQSI. The segment at residues 35–68 is a DNA-binding region (zn(2)-C6 fungal-type); sequence CDRCRFHKLKCNVPAAGHGGPVPCERCTRAKVPC. Disordered regions lie at residues 72–174, 346–382, 422–453, and 500–551; these read RRRR…PGQH, EFIV…GGDD, SESD…TGTA, and RGVG…GLGG. Low complexity-rich tracts occupy residues 89–108 and 359–378; these read PTRR…TSAA and SESS…NNEA. Gly residues predominate over residues 501–532; that stretch reads GVGGGGGGGGGGGGGGGGGVGGGGGGGGGPGG.

Its subcellular location is the nucleus. Functionally, transcription factor that regulates the expression of the gene cluster that mediates the biosynthesis of the tetramic acids Sch210971 and Sch210972, potential anti-HIV fungal natural product that contain a decalin core. The chain is Transcription factor tasR from Hapsidospora irregularis.